The primary structure comprises 612 residues: Threonine--tRNA ligase (612 aa).

A catalytic region spans residues 218 to 509; it reads DHRKLGVELG…LSEHFWGNFP (292 aa). Cys-310, His-361, and His-486 together coordinate Zn(2+).

Belongs to the class-II aminoacyl-tRNA synthetase family. In terms of assembly, homodimer. It depends on Zn(2+) as a cofactor.

It is found in the cytoplasm. The enzyme catalyses tRNA(Thr) + L-threonine + ATP = L-threonyl-tRNA(Thr) + AMP + diphosphate + H(+). Its function is as follows. Catalyzes the attachment of threonine to tRNA(Thr) in a two-step reaction: L-threonine is first activated by ATP to form Thr-AMP and then transferred to the acceptor end of tRNA(Thr). Also edits incorrectly charged L-seryl-tRNA(Thr). This is Threonine--tRNA ligase from Helicobacter acinonychis (strain Sheeba).